Here is a 31-residue protein sequence, read N- to C-terminus: Photosystem II reaction center protein M (31 aa).

Residues 5–25 traverse the membrane as a helical segment; it reads ILALMATALFIIIPTAFLIIL.

It belongs to the PsbM family. PSII is composed of 1 copy each of membrane proteins PsbA, PsbB, PsbC, PsbD, PsbE, PsbF, PsbH, PsbI, PsbJ, PsbK, PsbL, PsbM, PsbT, PsbX, PsbY, PsbZ, Psb30/Ycf12, at least 3 peripheral proteins of the oxygen-evolving complex and a large number of cofactors. It forms dimeric complexes.

It is found in the plastid. The protein resides in the chloroplast thylakoid membrane. In terms of biological role, one of the components of the core complex of photosystem II (PSII). PSII is a light-driven water:plastoquinone oxidoreductase that uses light energy to abstract electrons from H(2)O, generating O(2) and a proton gradient subsequently used for ATP formation. It consists of a core antenna complex that captures photons, and an electron transfer chain that converts photonic excitation into a charge separation. This subunit is found at the monomer-monomer interface. In Mesostigma viride (Green alga), this protein is Photosystem II reaction center protein M.